The following is a 139-amino-acid chain: ATP synthase epsilon chain (139 aa).

It belongs to the ATPase epsilon chain family. As to quaternary structure, F-type ATPases have 2 components, CF(1) - the catalytic core - and CF(0) - the membrane proton channel. CF(1) has five subunits: alpha(3), beta(3), gamma(1), delta(1), epsilon(1). CF(0) has three main subunits: a, b and c.

It localises to the cell inner membrane. Produces ATP from ADP in the presence of a proton gradient across the membrane. This chain is ATP synthase epsilon chain, found in Haemophilus ducreyi (strain 35000HP / ATCC 700724).